Here is a 326-residue protein sequence, read N- to C-terminus: Malate dehydrogenase (326 aa).

Residue 11–17 (GAAGQIG) coordinates NAD(+). Substrate is bound by residues Arg-92 and Arg-98. NAD(+) is bound by residues Asn-105, Gln-112, and 129–131 (VGN). 2 residues coordinate substrate: Asn-131 and Arg-162. Catalysis depends on His-187, which acts as the Proton acceptor.

Belongs to the LDH/MDH superfamily. MDH type 2 family.

It catalyses the reaction (S)-malate + NAD(+) = oxaloacetate + NADH + H(+). In terms of biological role, catalyzes the reversible oxidation of malate to oxaloacetate. The chain is Malate dehydrogenase from Chromobacterium violaceum (strain ATCC 12472 / DSM 30191 / JCM 1249 / CCUG 213 / NBRC 12614 / NCIMB 9131 / NCTC 9757 / MK).